We begin with the raw amino-acid sequence, 432 residues long: Chaperone SurA (432 aa).

The signal sequence occupies residues 1 to 26; it reads MKKIASFCSAAVLIASSFLLNNTVQA. PpiC domains are found at residues 176-277 and 286-386; these read QTEY…KVQD and VQEV…EVTG.

The protein localises to the periplasm. It catalyses the reaction [protein]-peptidylproline (omega=180) = [protein]-peptidylproline (omega=0). In terms of biological role, chaperone involved in the correct folding and assembly of outer membrane proteins. Recognizes specific patterns of aromatic residues and the orientation of their side chains, which are found more frequently in integral outer membrane proteins. May act in both early periplasmic and late outer membrane-associated steps of protein maturation. The sequence is that of Chaperone SurA from Idiomarina loihiensis (strain ATCC BAA-735 / DSM 15497 / L2-TR).